Reading from the N-terminus, the 156-residue chain is Small ribosomal subunit protein uS7 (156 aa).

It belongs to the universal ribosomal protein uS7 family. As to quaternary structure, part of the 30S ribosomal subunit. Contacts proteins S9 and S11.

Its function is as follows. One of the primary rRNA binding proteins, it binds directly to 16S rRNA where it nucleates assembly of the head domain of the 30S subunit. Is located at the subunit interface close to the decoding center, probably blocks exit of the E-site tRNA. The sequence is that of Small ribosomal subunit protein uS7 from Mycobacterium bovis (strain ATCC BAA-935 / AF2122/97).